We begin with the raw amino-acid sequence, 630 residues long: Arginine--tRNA ligase (630 aa).

A 'HIGH' region motif is present at residues 120–130 (ANPVHPLHIGH).

Belongs to the class-I aminoacyl-tRNA synthetase family.

Its subcellular location is the cytoplasm. The catalysed reaction is tRNA(Arg) + L-arginine + ATP = L-arginyl-tRNA(Arg) + AMP + diphosphate. This Pyrobaculum aerophilum (strain ATCC 51768 / DSM 7523 / JCM 9630 / CIP 104966 / NBRC 100827 / IM2) protein is Arginine--tRNA ligase.